We begin with the raw amino-acid sequence, 445 residues long: MDIQNIKETIAMIEEQNFDIRTITMGISLLDCIDADIDKTAEKIYQKIVNKAGKLVEVGNEIGHELGIKIVNKRVSVTPIAIIGAATAADDYTPLALAMDRAAKEIGIDFIGGYSALVQKGYQKGDEILIKSMPKALAATERVCASVNVGSTKSGINMTAVRDMGETIKIMSKGDKWLNAKLVVFANAVEDNPFMAGAFHGVGEADTIINVGVSGPGVVKRALEKVRGESFDILAETIKKTAFKITRIGQLVGQMASERLNVEFGIVDLSLAPTPAIGDSVARVLEEMGLETVGTHGTTAALAMLNDAVKKGGVMAAERVGGLSGAFIPVSEDEGMIAAVNSGALNIEKLEAMTCVCSVGLDMIAIPEETPASTIAAMIADEAAIGVINQKTTAVRIIPMGKEGEQIEFGGLFGVAPVMRVNKASSADFIARGGQIPAPIHSFKN.

It belongs to the UPF0210 family. As to quaternary structure, homodimer.

The chain is UPF0210 protein llmg_1581 from Lactococcus lactis subsp. cremoris (strain MG1363).